Reading from the N-terminus, the 338-residue chain is Adenylosuccinate synthetase (338 aa).

Residues 12 to 18 (GDEGKGK) and 42 to 44 (GHT) contribute to the GTP site. Asp-13 serves as the catalytic Proton acceptor. Mg(2+)-binding residues include Asp-13 and Gly-42. IMP contacts are provided by residues 13 to 16 (DEGK), 40 to 43 (NAGH), Thr-127, Arg-141, Gln-179, Thr-194, and Arg-256. Catalysis depends on His-43, which acts as the Proton donor. Position 252–258 (252–258 (TVTGRRR)) interacts with substrate. GTP-binding positions include Arg-258, 284 to 286 (CLD), and 324 to 326 (STG).

It belongs to the adenylosuccinate synthetase family. In terms of assembly, homodimer. Requires Mg(2+) as cofactor.

The protein resides in the cytoplasm. It catalyses the reaction IMP + L-aspartate + GTP = N(6)-(1,2-dicarboxyethyl)-AMP + GDP + phosphate + 2 H(+). It participates in purine metabolism; AMP biosynthesis via de novo pathway; AMP from IMP: step 1/2. Plays an important role in the de novo pathway of purine nucleotide biosynthesis. Catalyzes the first committed step in the biosynthesis of AMP from IMP. In Methanococcus maripaludis (strain C7 / ATCC BAA-1331), this protein is Adenylosuccinate synthetase.